Reading from the N-terminus, the 178-residue chain is CDP-diacylglycerol--glycerol-3-phosphate 3-phosphatidyltransferase (178 aa).

The next 4 membrane-spanning stretches (helical) occupy residues 28 to 48, 88 to 108, 125 to 145, and 147 to 167; these read LSSLVLVLFLALMDFLDGFFA, LIFFLLLGRDITLIIGGIFLI, LFVSLSLLSVGILNVYDVNFL, and ILTNVLEIVSLILILVSWVDY.

It belongs to the CDP-alcohol phosphatidyltransferase class-I family.

The protein localises to the cell membrane. The enzyme catalyses a CDP-1,2-diacyl-sn-glycerol + sn-glycerol 3-phosphate = a 1,2-diacyl-sn-glycero-3-phospho-(1'-sn-glycero-3'-phosphate) + CMP + H(+). It functions in the pathway phospholipid metabolism; phosphatidylglycerol biosynthesis; phosphatidylglycerol from CDP-diacylglycerol: step 1/2. Its function is as follows. This protein catalyzes the committed step to the synthesis of the acidic phospholipids. This is CDP-diacylglycerol--glycerol-3-phosphate 3-phosphatidyltransferase (pgsA) from Aquifex aeolicus (strain VF5).